Here is a 118-residue protein sequence, read N- to C-terminus: Large ribosomal subunit protein bL20 (118 aa).

The protein belongs to the bacterial ribosomal protein bL20 family.

Its function is as follows. Binds directly to 23S ribosomal RNA and is necessary for the in vitro assembly process of the 50S ribosomal subunit. It is not involved in the protein synthesizing functions of that subunit. In Synechococcus sp. (strain JA-2-3B'a(2-13)) (Cyanobacteria bacterium Yellowstone B-Prime), this protein is Large ribosomal subunit protein bL20.